The chain runs to 407 residues: Arginine biosynthesis bifunctional protein ArgJ (407 aa).

Residues T157, K183, T194, E280, N402, and T407 each contribute to the substrate site. Catalysis depends on T194, which acts as the Nucleophile.

Belongs to the ArgJ family. Heterotetramer of two alpha and two beta chains.

Its subcellular location is the cytoplasm. It carries out the reaction N(2)-acetyl-L-ornithine + L-glutamate = N-acetyl-L-glutamate + L-ornithine. The catalysed reaction is L-glutamate + acetyl-CoA = N-acetyl-L-glutamate + CoA + H(+). It functions in the pathway amino-acid biosynthesis; L-arginine biosynthesis; L-ornithine and N-acetyl-L-glutamate from L-glutamate and N(2)-acetyl-L-ornithine (cyclic): step 1/1. The protein operates within amino-acid biosynthesis; L-arginine biosynthesis; N(2)-acetyl-L-ornithine from L-glutamate: step 1/4. Catalyzes two activities which are involved in the cyclic version of arginine biosynthesis: the synthesis of N-acetylglutamate from glutamate and acetyl-CoA as the acetyl donor, and of ornithine by transacetylation between N(2)-acetylornithine and glutamate. This Oceanobacillus iheyensis (strain DSM 14371 / CIP 107618 / JCM 11309 / KCTC 3954 / HTE831) protein is Arginine biosynthesis bifunctional protein ArgJ.